Reading from the N-terminus, the 215-residue chain is MRVKHKKWAVPLMEAHPEMMTMDPASFKGRWQERFAKPQPLQVEVGMGKGQFIIGMAKAHPEINFIGLEIESTVAAIALKNALPEQLPNLTLVRGDGAGLDTYFEDGSIDRLYLNFSDPWPKTRHEKRRLTYKTFLANYQQVVKPGGGLEFKTDNQGLFEYSLTSLNNFGMIFDGVWLNLHESPENEGNVETEYEQRFASLGQPIYKLKAHFPVN.

S-adenosyl-L-methionine is bound by residues E44, E69, D96, and D118. D118 is a catalytic residue. K122 contacts substrate. The interval 124 to 129 (RHEKRR) is interaction with RNA. Substrate-binding positions include D154 and 192 to 195 (TEYE).

This sequence belongs to the class I-like SAM-binding methyltransferase superfamily. TrmB family.

The catalysed reaction is guanosine(46) in tRNA + S-adenosyl-L-methionine = N(7)-methylguanosine(46) in tRNA + S-adenosyl-L-homocysteine. It functions in the pathway tRNA modification; N(7)-methylguanine-tRNA biosynthesis. Functionally, catalyzes the formation of N(7)-methylguanine at position 46 (m7G46) in tRNA. The sequence is that of tRNA (guanine-N(7)-)-methyltransferase from Limosilactobacillus fermentum (strain NBRC 3956 / LMG 18251) (Lactobacillus fermentum).